We begin with the raw amino-acid sequence, 401 residues long: Acetate kinase (401 aa).

Asn-9 contributes to the Mg(2+) binding site. Residue Lys-16 participates in ATP binding. Arg-88 is a substrate binding site. Catalysis depends on Asp-147, which acts as the Proton donor/acceptor. ATP-binding positions include 207–211, 282–284, and 333–337; these read HLGNG, DCR, and GIGEN. Position 388 (Glu-388) interacts with Mg(2+).

The protein belongs to the acetokinase family. Homodimer. Mg(2+) is required as a cofactor. Requires Mn(2+) as cofactor.

Its subcellular location is the cytoplasm. The catalysed reaction is acetate + ATP = acetyl phosphate + ADP. The protein operates within metabolic intermediate biosynthesis; acetyl-CoA biosynthesis; acetyl-CoA from acetate: step 1/2. In terms of biological role, catalyzes the formation of acetyl phosphate from acetate and ATP. Can also catalyze the reverse reaction. The chain is Acetate kinase from Haemophilus influenzae (strain PittEE).